The chain runs to 199 residues: Probable GTP-binding protein EngB (199 aa).

One can recognise an EngB-type G domain in the interval isoleucine 21 to glycine 195. Residues glycine 29–serine 36, glycine 56–leucine 60, aspartate 81–glycine 84, threonine 151–aspartate 154, and valine 174–asparagine 176 each bind GTP. 2 residues coordinate Mg(2+): serine 36 and threonine 58.

This sequence belongs to the TRAFAC class TrmE-Era-EngA-EngB-Septin-like GTPase superfamily. EngB GTPase family. Requires Mg(2+) as cofactor.

Its function is as follows. Necessary for normal cell division and for the maintenance of normal septation. The sequence is that of Probable GTP-binding protein EngB from Campylobacter lari (strain RM2100 / D67 / ATCC BAA-1060).